Reading from the N-terminus, the 192-residue chain is Crossover junction endodeoxyribonuclease RuvC (192 aa).

Catalysis depends on residues D20, E80, and D153. Mg(2+)-binding residues include D20, E80, and D153.

Belongs to the RuvC family. In terms of assembly, homodimer which binds Holliday junction (HJ) DNA. The HJ becomes 2-fold symmetrical on binding to RuvC with unstacked arms; it has a different conformation from HJ DNA in complex with RuvA. In the full resolvosome a probable DNA-RuvA(4)-RuvB(12)-RuvC(2) complex forms which resolves the HJ. Requires Mg(2+) as cofactor.

Its subcellular location is the cytoplasm. It carries out the reaction Endonucleolytic cleavage at a junction such as a reciprocal single-stranded crossover between two homologous DNA duplexes (Holliday junction).. In terms of biological role, the RuvA-RuvB-RuvC complex processes Holliday junction (HJ) DNA during genetic recombination and DNA repair. Endonuclease that resolves HJ intermediates. Cleaves cruciform DNA by making single-stranded nicks across the HJ at symmetrical positions within the homologous arms, yielding a 5'-phosphate and a 3'-hydroxyl group; requires a central core of homology in the junction. The consensus cleavage sequence is 5'-(A/T)TT(C/G)-3'. Cleavage occurs on the 3'-side of the TT dinucleotide at the point of strand exchange. HJ branch migration catalyzed by RuvA-RuvB allows RuvC to scan DNA until it finds its consensus sequence, where it cleaves and resolves the cruciform DNA. This Christiangramia forsetii (strain DSM 17595 / CGMCC 1.15422 / KT0803) (Gramella forsetii) protein is Crossover junction endodeoxyribonuclease RuvC.